A 240-amino-acid polypeptide reads, in one-letter code: Probable septum site-determining protein MinC (240 aa).

Belongs to the MinC family. In terms of assembly, interacts with MinD and FtsZ.

Functionally, cell division inhibitor that blocks the formation of polar Z ring septums. Rapidly oscillates between the poles of the cell to destabilize FtsZ filaments that have formed before they mature into polar Z rings. Prevents FtsZ polymerization. The sequence is that of Probable septum site-determining protein MinC from Buchnera aphidicola subsp. Cinara cedri (strain Cc).